Here is a 465-residue protein sequence, read N- to C-terminus: Glutamate--tRNA ligase 1 (465 aa).

The 'HIGH' region motif lies at 8-18; that stretch reads PSPTGNLHIGG. A 'KMSKS' region motif is present at residues 236–240; sequence KLSKR. Lys-239 contributes to the ATP binding site.

It belongs to the class-I aminoacyl-tRNA synthetase family. Glutamate--tRNA ligase type 1 subfamily. In terms of assembly, monomer.

It is found in the cytoplasm. The catalysed reaction is tRNA(Glu) + L-glutamate + ATP = L-glutamyl-tRNA(Glu) + AMP + diphosphate. Catalyzes the attachment of glutamate to tRNA(Glu) in a two-step reaction: glutamate is first activated by ATP to form Glu-AMP and then transferred to the acceptor end of tRNA(Glu). This chain is Glutamate--tRNA ligase 1, found in Wolinella succinogenes (strain ATCC 29543 / DSM 1740 / CCUG 13145 / JCM 31913 / LMG 7466 / NCTC 11488 / FDC 602W) (Vibrio succinogenes).